A 226-amino-acid polypeptide reads, in one-letter code: 2,3-bisphosphoglycerate-dependent phosphoglycerate mutase (226 aa).

Residues 8-15 (RHGQSVWN), 21-22 (TG), Arg-58, 109-112 (ERMY), Lys-120, 136-137 (RR), and 180-181 (GN) each bind substrate. His-9 acts as the Tele-phosphohistidine intermediate in catalysis. The active-site Proton donor/acceptor is the Glu-109.

It belongs to the phosphoglycerate mutase family. BPG-dependent PGAM subfamily.

It catalyses the reaction (2R)-2-phosphoglycerate = (2R)-3-phosphoglycerate. Its pathway is carbohydrate degradation; glycolysis; pyruvate from D-glyceraldehyde 3-phosphate: step 3/5. Its function is as follows. Catalyzes the interconversion of 2-phosphoglycerate and 3-phosphoglycerate. In Chlamydia trachomatis serovar L2b (strain UCH-1/proctitis), this protein is 2,3-bisphosphoglycerate-dependent phosphoglycerate mutase.